A 319-amino-acid polypeptide reads, in one-letter code: MamJ paralog LimJ (319 aa).

2 disordered regions span residues 1 to 59 and 145 to 176; these read MMME…PAPV and AAAPEPEPEPVPEPEPEPEPEAAHDHAATETE. Residues 30-52 show a composition bias toward low complexity; the sequence is AALAPAADAEIPASSAPEPAAPI. Over residues 150–164 the composition is skewed to acidic residues; the sequence is PEPEPVPEPEPEPEP.

Belongs to the magnetosome MamJ protein family.

Its subcellular location is the magnetosome. Its function is as follows. Regulates the dynamic behavior of MamK filaments; paralog MamJ also promotes MamK turnover. At least one other protein besides MamJ and LimJ is required for MamK turnover. Might connect magnetosomes to MamK filaments. The chain is MamJ paralog LimJ from Paramagnetospirillum magneticum (strain ATCC 700264 / AMB-1) (Magnetospirillum magneticum).